The primary structure comprises 275 residues: NH(3)-dependent NAD(+) synthetase (275 aa).

50–57 (GISGGVDS) is a binding site for ATP. Asp56 is a Mg(2+) binding site. Position 147 (Arg147) interacts with deamido-NAD(+). Thr167 lines the ATP pocket. Glu172 is a binding site for Mg(2+). Positions 180 and 187 each coordinate deamido-NAD(+). Residues Lys196 and Thr218 each contribute to the ATP site. 267-268 (HK) serves as a coordination point for deamido-NAD(+).

It belongs to the NAD synthetase family. Homodimer.

The enzyme catalyses deamido-NAD(+) + NH4(+) + ATP = AMP + diphosphate + NAD(+) + H(+). Its pathway is cofactor biosynthesis; NAD(+) biosynthesis; NAD(+) from deamido-NAD(+) (ammonia route): step 1/1. Its function is as follows. Catalyzes the ATP-dependent amidation of deamido-NAD to form NAD. Uses ammonia as a nitrogen source. This chain is NH(3)-dependent NAD(+) synthetase, found in Pseudomonas aeruginosa (strain LESB58).